The primary structure comprises 216 residues: Ras-related protein Rab11A (216 aa).

GTP is bound by residues 19 to 27 (GDSGVGKSN), 38 to 44 (CLESKST), 67 to 71 (DTAGQ), 125 to 128 (NKSD), and 155 to 157 (SAL). An Effector region motif is present at residues 41-49 (SKSTIGVEF). Residues cysteine 213 and cysteine 214 are each lipidated (S-geranylgeranyl cysteine).

It belongs to the small GTPase superfamily. Rab family.

It is found in the cell membrane. In Nicotiana tabacum (Common tobacco), this protein is Ras-related protein Rab11A (RAB11A).